The primary structure comprises 115 residues: Small polypeptide DEVIL 13 (115 aa).

A compositionally biased stretch (basic and acidic residues) spans 1-12 (MEEKWKLSKKDT). The tract at residues 1–89 (MEEKWKLSKK…SITQKYSSLA (89 aa)) is disordered. The segment covering 13–65 (TASSSSSKSKFSRSFSTSASSTKSPIFVRSSSTKCSVPSSSSSSSSSSSISRS) has biased composition (low complexity). A helical membrane pass occupies residues 44 to 63 (STKCSVPSSSSSSSSSSSIS). Positions 80–111 (SITQKYSSLAKEQKARFYIMRRCVAMLVCWHK) are required for DVL/RTFL small polypeptide activity.

Belongs to the DVL/RTFL small polypeptides family.

The protein localises to the cell membrane. In terms of biological role, small polypeptide acting as a regulatory molecule which coordinates cellular responses required for differentiation, growth and development, probably by restricting polar cell proliferation in lateral organs and coordinating socket cell recruitment and differentiation at trichome sites. The protein is Small polypeptide DEVIL 13 of Arabidopsis thaliana (Mouse-ear cress).